The following is a 75-amino-acid chain: UPF0346 protein LEUM_0763 (75 aa).

Belongs to the UPF0346 family.

The chain is UPF0346 protein LEUM_0763 from Leuconostoc mesenteroides subsp. mesenteroides (strain ATCC 8293 / DSM 20343 / BCRC 11652 / CCM 1803 / JCM 6124 / NCDO 523 / NBRC 100496 / NCIMB 8023 / NCTC 12954 / NRRL B-1118 / 37Y).